Consider the following 879-residue polypeptide: Levansucrase (879 aa).

Positions Met1–Ala37 are cleaved as a signal peptide. Tandem repeats lie at residues Asp66–Asn81, Asp82–Asn97, Asp98–Asn113, Asp114–Asn129, Asp130–Asn145, Asp146–Asn161, and Asp162–Asn177. The segment at Asp66 to Asn177 is 7 X 16 AA tandem repeats of D-N-A-T-S-G-S-T-K-Q-E-S-S-[IV]-A-N. Polar residues-rich tracts occupy residues Asp66–Lys180 and Asn189–Gln213. Residues Asp66–Gln213 are disordered. Positions 311, 312, and 382 each coordinate sucrose. Asp312 acts as the Nucleophile in catalysis. Ca(2+) is bound at residue Asp460. Residues Arg465 and Asp466 each coordinate sucrose. The Ca(2+) site is built by Gln491, Leu528, Asn530, and Asp562. Glu563 serves as a coordination point for sucrose. Catalysis depends on Glu565, which acts as the Proton donor/acceptor. Arg583 contacts sucrose. Positions Ser743–Gln830 are disordered. Residues Val754–Thr821 are compositionally biased toward polar residues. The LPXTG sorting signal motif lies at Leu841–Gly845. Thr844 is subject to Pentaglycyl murein peptidoglycan amidated threonine. The propeptide at Gly845–Asp879 is removed by sortase.

The protein belongs to the glycosyl hydrolase 68 family.

The protein localises to the secreted. It is found in the cell wall. The enzyme catalyses [6)-beta-D-fructofuranosyl-(2-&gt;](n) alpha-D-glucopyranoside + sucrose = [6)-beta-D-fructofuranosyl-(2-&gt;](n+1) alpha-D-glucopyranoside + D-glucose. Ca(2+) may play an important structural role and promote stability of levansucrase. Fructosyltransferase that catalyzes the polymerization of the fructose moiety of sucrose to produce levan polymer and the fructo-oligosaccharide (FOS) 1-kestose. Also displays sucrose hydrolase activity. This Fructilactobacillus sanfranciscensis (Lactobacillus sanfranciscensis) protein is Levansucrase.